We begin with the raw amino-acid sequence, 249 residues long: Homeobox-leucine zipper protein HOX6 (249 aa).

The interval M1–K32 is disordered. Gly residues predominate over residues G15–A27. The homeobox DNA-binding region spans A27 to Q86. The segment at K85–P129 is leucine-zipper. Positions F194 to E249 are disordered. Over residues F212–P242 the composition is skewed to polar residues.

The protein belongs to the HD-ZIP homeobox family. Class I subfamily. In terms of tissue distribution, expressed in seedlings, roots, leaves, nodes, internodes, flowers and embryo.

The protein resides in the nucleus. Its function is as follows. Probable transcription factor that binds to the DNA sequence 5'-CAAT[AT]ATTG-3'. This chain is Homeobox-leucine zipper protein HOX6 (HOX6), found in Oryza sativa subsp. indica (Rice).